The chain runs to 460 residues: Nuclear distribution protein PAC1 (460 aa).

In terms of domain architecture, LisH spans 9-41 (QAEELHKSIIAYLAANNLQDSANAMRTELGLGE). Positions 61 to 88 (TSVVRLQKKIMDLEAQTQTLQTELNSAT) form a coiled coil. Over residues 82–92 (TELNSATPTSN) the composition is skewed to polar residues. Positions 82–105 (TELNSATPTSNRRGDPSSWLPAGP) are disordered. WD repeat units lie at residues 112–153 (SHRT…RTVK), 155–195 (HTKA…QNIR), 199–246 (GHDH…CVKT), 249–288 (GHAD…PEAK), 293–354 (GHEH…KTLI), 355–394 (GHDN…KCVK), and 399–456 (SHEH…MSLR). The disordered stretch occupies residues 414–433 (IKDKGPGEETNGDVGTPKKA).

The protein belongs to the WD repeat LIS1/nudF family. Self-associates. Interacts with NDL1 and dynein.

The protein resides in the cytoplasm. The protein localises to the cytoskeleton. Its subcellular location is the spindle pole. In terms of biological role, positively regulates the activity of the minus-end directed microtubule motor protein dynein. May enhance dynein-mediated microtubule sliding by targeting dynein to the microtubule plus end. Required for nuclear migration during vegetative growth as well as development. Required for retrograde early endosome (EE) transport from the hyphal tip. Required for localization of dynein to the mitotic spindle poles. Recruits additional proteins to the dynein complex at SPBs. This is Nuclear distribution protein PAC1 from Gibberella zeae (strain ATCC MYA-4620 / CBS 123657 / FGSC 9075 / NRRL 31084 / PH-1) (Wheat head blight fungus).